The following is a 388-amino-acid chain: MRYFTAGESHGPRLTAIIEGVPAGLPLTADYINAELRRRQGGYGRGGRMKIESDQVEITSGVRHGLTMGSPITLNVTNRDFKNWTEIMSAADIEDKKKSIRKLTKPRPGHADLVGGMKYRFSDLRNSLERSSARETTMRVAVGSVAKRLLEELEITIASHVVVLGGIEVDVPENLTVAEIKERASQSEISVVNQEHEQEIKDYIDQIKKEGNTIGGIIETVVGGVPVGLGSYVQWDRKLDAQIAQGVVSINAFKGVEFGLGFKDGYLKGSYVMDEITWSKEDGYRRKSNNLGGFEGGMTNGQPIVVRGVMKPIPTLYKPLMSVDIETHEPYKASVERSDPTAVPAAAVVMEGVVATVLATEILNKFSSDNMEELKEAVKSHQKFIKEF.

Arg-39 and Arg-45 together coordinate NADP(+). FMN is bound by residues Arg-130–Ser-132, Asn-251–Ala-252, Gly-296, Lys-311–Thr-315, and Arg-337.

Belongs to the chorismate synthase family. Homotetramer. The cofactor is FMNH2.

The catalysed reaction is 5-O-(1-carboxyvinyl)-3-phosphoshikimate = chorismate + phosphate. Its pathway is metabolic intermediate biosynthesis; chorismate biosynthesis; chorismate from D-erythrose 4-phosphate and phosphoenolpyruvate: step 7/7. Functionally, catalyzes the anti-1,4-elimination of the C-3 phosphate and the C-6 proR hydrogen from 5-enolpyruvylshikimate-3-phosphate (EPSP) to yield chorismate, which is the branch point compound that serves as the starting substrate for the three terminal pathways of aromatic amino acid biosynthesis. This reaction introduces a second double bond into the aromatic ring system. The polypeptide is Chorismate synthase (Streptococcus mutans serotype c (strain ATCC 700610 / UA159)).